The chain runs to 972 residues: MNTLSQAIKAYNSNDYQLALKLFEKSAEIYGRKIVEFQITKCKEKLSAHPSVNSAHLSVNKEEKVNVCDSPLDIATQLLLSNVKKLVLSDSEKNTLKNKWKLLTEKKSENAEVRAVALVPKDFPKDLVLAPLPDHVNDFTWYKKRKKRLGIKPEHQHVGLSIIVTTFNRPAILSITLACLVNQKTHYPFEVIVTDDGSQEDLSPIIRQYENKLDIRYVRQKDNGFQASAARNMGLRLAKYDFIGLLDCDMAPNPLWVHSYVAELLEDDDLTIIGPRKYIDTQHIDPKDFLNNASLLESLPEVKTNNSVAAKGEGTVSLDWRLEQFEKTENLRLSDSPFRFFAAGNVAFAKKWLNKSGFFDEEFNHWGGEDVEFGYRLFRYGSFFKTIDGIMAYHQEPPGKENETDREAGKNITLDIMREKVPYIYRKLLPIEDSHINRVPLVSIYIPAYNCANYIQRCVDSALNQTVVDLEVCICNDGSTDNTLEVINKLYGNNPRVRIMSKPNGGIASASNAAVSFAKGYYIGQLDSDDYLEPDAVELCLKEFLKDKTLACVYTTNRNVNPDGSLIANGYNWPEFSREKLTTAMIAHHFRMFTIRAWHLTDGFNEKIENAVDYDMFLKLSEVGKFKHLNKICYNRVLHGDNTSIKKLGIQKKNHFVVVNQSLNRQGITYYNYDEFDDLDESRKYIFNKTAEYQEEIDILKDIKIIQNKDAKIAVSIFYPNTLNGLVKKLNNIIEYNKNIFVIVLHVDKNHLTPDIKKEILAFYHKHQVNILLNNDISYYTSNRLIKTEAHLSNINKLSQLNLNCEYIIFDNHDSLFVKNDSYAYMKKYDVGMNFSALTHDWIEKINAHPPFKKLIKTYFNDNDLKSMNVKGASQGMFMTYALAHELLTIIKEVITSCQSIDSVPEYNTEDIWFQFALLILEKKTGHVFNKTSTLTYMPWERKLQWTNEQIESAKRGENIPVNKFIINSITL.

Positions 152–325 (KPEHQHVGLS…VSLDWRLEQF (174 aa)) are A1. Residues 432–604 (EDSHINRVPL…IRAWHLTDGF (173 aa)) form an A2 region.

It belongs to the glycosyltransferase 2 family. CS/HAS subfamily. Mg(2+) is required as a cofactor. Requires Co(2+) as cofactor.

The protein resides in the cell membrane. The catalysed reaction is [hyaluronan](n) + UDP-N-acetyl-alpha-D-glucosamine = N-acetyl-beta-D-glucosaminyl-(1-&gt;4)-[hyaluronan](n) + UDP + H(+). The enzyme catalyses N-acetyl-beta-D-glucosaminyl-(1-&gt;4)-[hyaluronan](n) + UDP-alpha-D-glucuronate = [hyaluronan](n+1) + UDP + H(+). It catalyses the reaction 3-O-(beta-D-GalNAc-(1-&gt;4)-beta-D-GlcA-(1-&gt;3)-beta-D-Gal-(1-&gt;3)-beta-D-Gal-(1-&gt;4)-beta-D-Xyl)-L-seryl-[protein] + UDP-alpha-D-glucuronate = 3-O-(beta-D-GlcA-(1-&gt;3)-beta-D-GalNAc-(1-&gt;4)-beta-D-GlcA-(1-&gt;3)-beta-D-Gal-(1-&gt;3)-beta-D-Gal-(1-&gt;4)-beta-D-Xyl)-L-seryl-[protein] + UDP + H(+). It carries out the reaction 3-O-{[beta-D-GalNAc-(1-&gt;4)-beta-D-GlcA-(1-&gt;3)](n)-beta-D-GalNAc-(1-&gt;4)-beta-D-GlcA-(1-&gt;3)-beta-D-Gal-(1-&gt;3)-beta-D-Gal-(1-&gt;4)-beta-D-Xyl}-L-seryl-[protein] + UDP-alpha-D-glucuronate = 3-O-{beta-D-GlcA-(1-&gt;3)-[beta-D-GalNAc-(1-&gt;4)-beta-D-GlcA-(1-&gt;3)](n)-beta-D-GalNAc-(1-&gt;4)-beta-D-GlcA-(1-&gt;3)-beta-D-Gal-(1-&gt;3)-beta-D-Gal-(1-&gt;4)-beta-D-Xyl}-L-seryl-[protein] + UDP + H(+). Its function is as follows. Catalyzes the polymerization of hyaluronan, a polysaccharide composed of a repeating disaccharide of N-acetylglucosamine (GlcNAc) and glucuronic acid (GlcUA) units. Each unit has the composition in beta-(1-&gt;4)-GlcUA-beta-(1-&gt;3)-GlcNAc. The polypeptide is Hyaluronan synthase (hyaD) (Pasteurella multocida).